Reading from the N-terminus, the 143-residue chain is MSLSAKDKATVKDFFGKMSTRSDDIGAEALSRLVAVYPQTKSYFAHWKSASPGSAPVRKHGITIMGGVYDAVGKIDDLKAGLLSLSELHAFMLRVDPVNFKLLAHCMLVCMSMVFPEEFTPQVHVAVDKFLAQLALALCEKYR.

Ser2 carries the N-acetylserine modification. Residues 2 to 143 enclose the Globin domain; it reads SLSAKDKATV…LALALCEKYR (142 aa). His60 is a binding site for O2. Position 89 (His89) interacts with heme b.

Belongs to the globin family. Hb 1 is a heterotetramer of two alpha-1 and two beta-1 chains. In terms of tissue distribution, red blood cells.

Functionally, involved in oxygen transport from gills to the various peripheral tissues. The sequence is that of Hemoglobin subunit alpha-1 (hba1) from Boreogadus saida (Polar cod).